The primary structure comprises 511 residues: GMP synthase [glutamine-hydrolyzing] (511 aa).

In terms of domain architecture, Glutamine amidotransferase type-1 spans 3–198 (SVLVLDFGSQ…LLNIAAITPD (196 aa)). Catalysis depends on Cys-80, which acts as the Nucleophile. Residues His-172 and Glu-174 contribute to the active site. One can recognise a GMPS ATP-PPase domain in the interval 199 to 386 (WSSKSFIEHQ…LGIPEDILMR (188 aa)). 226 to 232 (SGGVDST) contributes to the ATP binding site.

As to quaternary structure, homodimer.

The enzyme catalyses XMP + L-glutamine + ATP + H2O = GMP + L-glutamate + AMP + diphosphate + 2 H(+). Its pathway is purine metabolism; GMP biosynthesis; GMP from XMP (L-Gln route): step 1/1. Its function is as follows. Catalyzes the synthesis of GMP from XMP. This is GMP synthase [glutamine-hydrolyzing] from Chlorobium chlorochromatii (strain CaD3).